Reading from the N-terminus, the 387-residue chain is MSNEMYYVQASDPAILEKGECGGAVTALFKYLLDKGIVDGVLALKKGVDVYDAIPTFVTSSEDLLSTAGSLHCAPTMWGGIIKEYLQDAKIAVPVKPCDMRAIVELAKRAQINLDNVYMIGLNCGGTVPPKTAMEMIKLFYEVDPKDVVKEEIDKGKFIIVMKDGSHKEVKMHDLEDNGYGRRVNCQRCDEKIPRKADIAAGNWGVIGEDAGKYTFMEVCTEKGKQLLKDAEKDGYVKTKAPNPKGLEIRAKVESSMLKMGEDYKNKWLEEKYPTIEEWNRQWNKCIKCYGCRDVCPVCFCRECALTADYVDTGSIPPDPIMFQGVRMSHMAFSCVNCGQCEDVCPMEIPVARIFHKIQEKTRKELGYRPGVDDEAPPALGGSCPTQ.

2 consecutive 4Fe-4S ferredoxin-type domains span residues 275–298 (TIEE…VCPV) and 326–355 (VRMS…ARIF). [4Fe-4S] cluster is bound by residues C286, C289, C292, C296, C335, C338, C341, and C345. The interval 366–387 (LGYRPGVDDEAPPALGGSCPTQ) is disordered.

The protein belongs to the FrhB family. As to quaternary structure, dimer of an alpha (FdhA1) and a beta (FdhB1) subunit. It depends on [4Fe-4S] cluster as a cofactor. The cofactor is FAD. Requires Zn(2+) as cofactor.

The catalysed reaction is oxidized coenzyme F420-(gamma-L-Glu)(n) + formate + 2 H(+) = reduced coenzyme F420-(gamma-L-Glu)(n) + CO2. Its function is as follows. Catalyzes the oxidation of formate to carbon dioxide, with coenzyme F420 as the electron acceptor. In vitro can also use methyl viologen as electron acceptor. In Methanococcus maripaludis (strain DSM 14266 / JCM 13030 / NBRC 101832 / S2 / LL), this protein is F420-dependent formate dehydrogenase 1 subunit beta.